Reading from the N-terminus, the 66-residue chain is Large ribosomal subunit protein bL35 (66 aa).

The span at 1 to 24 (MPKQKTHRGAAKRFKKTGSGKLKR) shows a compositional bias: basic residues. A disordered region spans residues 1 to 26 (MPKQKTHRGAAKRFKKTGSGKLKRDH).

It belongs to the bacterial ribosomal protein bL35 family.

The protein is Large ribosomal subunit protein bL35 of Bacillus cytotoxicus (strain DSM 22905 / CIP 110041 / 391-98 / NVH 391-98).